Here is a 499-residue protein sequence, read N- to C-terminus: MGLFSAKREPPPVVPTDTITPLRFVDELYPFAFDFSLVFRDVLDPEVLRAAADSVLQRDGWRQLGARLRRDQNSKLEYHLPTHFSKERPLFLFTTDNHTDMSINDHPVLRHVPEPNPDRPTVHQPAAATFRRHMRGPNSPEAFDDWLYNDIPQLAIHIISFSDATIITVTLLHTLTDFLGLMAFYKAWLLTLHGRQDEIAPYIGYLDADPLEGLQQGQAKPPKYVFADREVGRWGYLKFVFRHMWDCYWHPEASLRFFTLPGKFVENLSTSARAELIAAHPERKPEDCFVSDSDVLCAWWTGLMVRNQSPACPPAQSVCLTNRFDSRDVLAKMGLLPSTNISFFGNAAYNASFFAPASAFAGPEKEKLGLLANQVRDSIKLHRTVEQLQAQDAAFRESKARTGHLPLYGEGDMMMCVFTNCYRGRLYQMDFSPALVDKEKSKGKKQALPVFINCTGMESRWSARNATAILGKSENGDWWMSSRLRQDVWERIEAEFERM.

The protein localises to the nucleus. Its pathway is antibiotic biosynthesis. Transcriptional regulator; part of the gene cluster that mediates the biosynthesis of sordarin and hypoxysordarin, glycoside antibiotics with a unique tetracyclic diterpene aglycone structure. First, the geranylgeranyl diphosphate synthase sdnC constructs GGDP from farnesyl diphosphate and isopentenyl diphosphate. The diterpene cyclase sdnA then catalyzes the cyclization of GGDP to afford cycloaraneosene. Cycloaraneosene is then hydroxylated four times by the putative cytochrome P450 monooxygenases sdnB, sdnE, sdnF and sdnH to give a hydroxylated cycloaraneosene derivative such as cycloaraneosene-8,9,13,19-tetraol. Although the order of the hydroxylations is unclear, at least C8, C9 and C13 of the cycloaraneosene skeleton are hydroxylated before the sordaricin formation. Dehydration of the 13-hydroxy group of the hydroxylated cycloaraneosene derivative might be catalyzed by an unassigned hypothetical protein such as sdnG and sdnP to construct the cyclopentadiene moiety. The FAD-dependent oxidoreductase sdnN is proposed to catalyze the oxidation at C9 of the hydroxylated cycloaraneosene derivative and also catalyze the Baeyer-Villiger oxidation to give the lactone intermediate. The presumed lactone intermediate would be hydrolyzed to give an acrolein moiety and a carboxylate moiety. Then, [4+2]cycloaddition would occur between the acrolein moiety and the cyclopentadiene moiety to give sordaricin. SdnN might also be involved in the [4+2]cycloaddition after the hypothesized oxidation to accommodate the oxidized product and prompt the [4+2]cycloaddition. GDP-6-deoxy-D-altrose may be biosynthesized from GDP-D-mannose by the putative GDP-mannose-4,6-dehydratase sdnI and the short-chain dehydrogenase sdnK. The glycosyltransferase sdnJ catalyzes the attachment of 6-deoxy-D-altrose onto the 19-hydroxy group of sordaricin to give 4'-O-demethylsordarin. The methyltransferase sdnD would complete the biosynthesis of sordarin. Sordarin can be further modified into hypoxysordarin. The unique acyl chain at the 3'-hydroxy group of hypoxysordarin would be constructed by an iterative type I PKS sdnO and the trans-acting polyketide methyltransferase sdnL. SdnL would be responsible for the introduction of an alpha-methyl group of the polyketide chain. Alternatively, the beta-lactamase-like protein sdnR might be responsible for the cleavage and transfer of the polyketide chain from the PKS sdnO to sordarin. Two putative cytochrome P450 monooxygenases, sdnQ and sdnT, might catalyze the epoxidations of the polyketide chain to complete the biosynthesis of hypoxysordarin. Transcriptional regulators sdnM and sdnS are presumably encoded for the transcriptional regulation of the expression of the sdn gene cluster. This Sordaria araneosa (Pleurage araneosa) protein is Transcriptional regulator sdnM.